A 92-amino-acid chain; its full sequence is Cell division topological specificity factor (92 aa).

The protein belongs to the MinE family.

Prevents the cell division inhibition by proteins MinC and MinD at internal division sites while permitting inhibition at polar sites. This ensures cell division at the proper site by restricting the formation of a division septum at the midpoint of the long axis of the cell. The protein is Cell division topological specificity factor of Colwellia psychrerythraea (strain 34H / ATCC BAA-681) (Vibrio psychroerythus).